We begin with the raw amino-acid sequence, 441 residues long: Glutamate--tRNA ligase 2 (441 aa).

A 'HIGH' region motif is present at residues 9–19 (PSPTGYIHVGN). Positions 239-243 (ALSKR) match the 'KMSKS' region motif. K242 contacts ATP.

Belongs to the class-I aminoacyl-tRNA synthetase family. Glutamate--tRNA ligase type 1 subfamily. Monomer.

It localises to the cytoplasm. The enzyme catalyses tRNA(Glu) + L-glutamate + ATP = L-glutamyl-tRNA(Glu) + AMP + diphosphate. In terms of biological role, catalyzes the attachment of glutamate to tRNA(Glu) in a two-step reaction: glutamate is first activated by ATP to form Glu-AMP and then transferred to the acceptor end of tRNA(Glu). This is Glutamate--tRNA ligase 2 from Cereibacter sphaeroides (strain ATCC 17029 / ATH 2.4.9) (Rhodobacter sphaeroides).